A 485-amino-acid chain; its full sequence is Protein nucleotidyltransferase YdiU (485 aa).

ATP contacts are provided by glycine 90, glycine 92, arginine 93, lysine 113, aspartate 125, glycine 126, arginine 176, and arginine 183. The active-site Proton acceptor is the aspartate 252. Mg(2+) contacts are provided by asparagine 253 and aspartate 262. An ATP-binding site is contributed by aspartate 262.

Belongs to the SELO family. Mg(2+) serves as cofactor. Mn(2+) is required as a cofactor.

The catalysed reaction is L-seryl-[protein] + ATP = 3-O-(5'-adenylyl)-L-seryl-[protein] + diphosphate. It catalyses the reaction L-threonyl-[protein] + ATP = 3-O-(5'-adenylyl)-L-threonyl-[protein] + diphosphate. It carries out the reaction L-tyrosyl-[protein] + ATP = O-(5'-adenylyl)-L-tyrosyl-[protein] + diphosphate. The enzyme catalyses L-histidyl-[protein] + UTP = N(tele)-(5'-uridylyl)-L-histidyl-[protein] + diphosphate. The catalysed reaction is L-seryl-[protein] + UTP = O-(5'-uridylyl)-L-seryl-[protein] + diphosphate. It catalyses the reaction L-tyrosyl-[protein] + UTP = O-(5'-uridylyl)-L-tyrosyl-[protein] + diphosphate. Functionally, nucleotidyltransferase involved in the post-translational modification of proteins. It can catalyze the addition of adenosine monophosphate (AMP) or uridine monophosphate (UMP) to a protein, resulting in modifications known as AMPylation and UMPylation. This Aliivibrio fischeri (strain ATCC 700601 / ES114) (Vibrio fischeri) protein is Protein nucleotidyltransferase YdiU.